The sequence spans 263 residues: 3'-5' ssDNA/RNA exonuclease TatD (263 aa).

Residues Glu-91, His-127, and His-152 each contribute to the a divalent metal cation site.

It belongs to the metallo-dependent hydrolases superfamily. TatD-type hydrolase family. TatD subfamily. In terms of assembly, monomer. Mg(2+) is required as a cofactor.

It is found in the cytoplasm. Its function is as follows. 3'-5' exonuclease that prefers single-stranded DNA and RNA. May play a role in the H(2)O(2)-induced DNA damage repair. The protein is 3'-5' ssDNA/RNA exonuclease TatD of Klebsiella pneumoniae (strain 342).